The following is a 237-amino-acid chain: UDP-Gal:alpha-D-GlcNAc-diphosphoundecaprenol beta-1,4-galactosyltransferase (237 aa).

The Nucleophile role is filled by Glu101.

The protein belongs to the glycosyltransferase 26 family. Mn(2+) serves as cofactor. Ni(2+) is required as a cofactor. The cofactor is Pb(2+).

The catalysed reaction is N-acetyl-alpha-D-glucosaminyl-di-trans,octa-cis-undecaprenyl diphosphate + UDP-alpha-D-galactose = beta-D-Gal-(1-&gt;4)-alpha-D-GlcNAc-di-trans,octa-cis-undecaprenyl diphosphate + UDP + H(+). It functions in the pathway bacterial outer membrane biogenesis; LPS O-antigen biosynthesis. Galactosyltransferase that adds one galactose residue in the beta-1-4 linkage to GlcNAc-alpha-pyrophosphate-lipid in the biosynthesis of the O-polysaccharide repeating unit of the O antigen. The chain is UDP-Gal:alpha-D-GlcNAc-diphosphoundecaprenol beta-1,4-galactosyltransferase (wfeD) from Shigella boydii.